The chain runs to 684 residues: Translation factor GUF1 homolog, mitochondrial (684 aa).

Residues histidine 82–lysine 270 enclose the tr-type G domain. GTP-binding positions include alanine 91–serine 98, aspartate 163–histidine 167, and asparagine 217–aspartate 220.

Belongs to the TRAFAC class translation factor GTPase superfamily. Classic translation factor GTPase family. LepA subfamily.

It localises to the mitochondrion inner membrane. It carries out the reaction GTP + H2O = GDP + phosphate + H(+). In terms of biological role, promotes mitochondrial protein synthesis. May act as a fidelity factor of the translation reaction, by catalyzing a one-codon backward translocation of tRNAs on improperly translocated ribosomes. Binds to mitochondrial ribosomes in a GTP-dependent manner. The sequence is that of Translation factor GUF1 homolog, mitochondrial from Physcomitrium patens (Spreading-leaved earth moss).